Here is a 740-residue protein sequence, read N- to C-terminus: Ethylene receptor 1 (740 aa).

3 consecutive transmembrane segments (helical) span residues 23–43 (ISDF…IYFV), 53–73 (WVLV…LINL), and 92–112 (VLTA…IPDL). Residues C65 and H69 each coordinate Cu cation. The region spanning 158–307 (DRHTILKTTL…VVADQVAVAL (150 aa)) is the GAF domain. The 239-residue stretch at 350-588 (VMNHEMRTPM…TFIVKLGIAE (239 aa)) folds into the Histidine kinase domain. H353 carries the phosphohistidine; by autocatalysis modification. The Response regulatory domain maps to 614 to 731 (KVLVMDDNGV…KMRSVLSELI (118 aa)). D662 is modified (4-aspartylphosphate).

This sequence belongs to the ethylene receptor family. In terms of assembly, homodimer; disulfide-linked. It depends on Cu cation as a cofactor. In terms of processing, activation probably requires a transfer of a phosphate group between a His in the transmitter domain and an Asp of the receiver domain.

It is found in the endoplasmic reticulum membrane. The catalysed reaction is ATP + protein L-histidine = ADP + protein N-phospho-L-histidine.. May act early in the ethylene signal transduction pathway, possibly as an ethylene receptor, or as a regulator of the pathway. The sequence is that of Ethylene receptor 1 (ETR1) from Cucumis sativus (Cucumber).